The following is a 327-amino-acid chain: WRKY transcription factor WRKY76 (327 aa).

Residues Ala-56–Val-76 are a coiled coil. Positions Arg-87–Glu-135 are disordered. Residues Lys-106–Ser-112 carry the Nuclear localization signal motif. Positions Glu-114–His-126 are enriched in polar residues. Residues Asp-160 to Pro-226 constitute a DNA-binding region (WRKY).

This sequence belongs to the WRKY group II-a family.

It localises to the nucleus. Functionally, transcription repressor. Interacts specifically with the W box (5'-(T)TGAC[CT]-3'), a frequently occurring elicitor-responsive cis-acting element. Regulates, probably indirectly, the activation of defense-related genes during defense response. Modulates plant innate immunity against X.oryzae pv. oryzae (Xoo). This chain is WRKY transcription factor WRKY76, found in Oryza sativa subsp. japonica (Rice).